Here is a 701-residue protein sequence, read N- to C-terminus: Glycine--tRNA ligase beta subunit (701 aa).

The protein belongs to the class-II aminoacyl-tRNA synthetase family. Tetramer of two alpha and two beta subunits.

The protein localises to the cytoplasm. The enzyme catalyses tRNA(Gly) + glycine + ATP = glycyl-tRNA(Gly) + AMP + diphosphate. This is Glycine--tRNA ligase beta subunit from Bradyrhizobium sp. (strain BTAi1 / ATCC BAA-1182).